A 299-amino-acid polypeptide reads, in one-letter code: Protease HtpX homolog (299 aa).

2 helical membrane passes run 14–34 (WLLL…VGYL) and 39–59 (GFGG…TMIF). His-143 lines the Zn(2+) pocket. Glu-144 is an active-site residue. His-147 serves as a coordination point for Zn(2+). 2 consecutive transmembrane segments (helical) span residues 153–173 (IRIS…AVMA) and 198–218 (IILL…ATLV). Glu-227 contributes to the Zn(2+) binding site.

This sequence belongs to the peptidase M48B family. Zn(2+) serves as cofactor.

Its subcellular location is the cell membrane. This Streptococcus thermophilus (strain CNRZ 1066) protein is Protease HtpX homolog.